The sequence spans 75 residues: MAEEGSELKEVIIGAPAMADTDRADTYVNDVRDSSQFFGRDARLYFGLNVNRFAGLACGMVFAGVLLVPLLLLAF.

The helical transmembrane segment at 53 to 73 (FAGLACGMVFAGVLLVPLLLL) threads the bilayer.

The protein belongs to the MtrF family. As to quaternary structure, the complex is composed of 8 subunits; MtrA, MtrB, MtrC, MtrD, MtrE, MtrF, MtrG and MtrH.

It localises to the cell membrane. The catalysed reaction is 5-methyl-5,6,7,8-tetrahydromethanopterin + coenzyme M + 2 Na(+)(in) = 5,6,7,8-tetrahydromethanopterin + methyl-coenzyme M + 2 Na(+)(out). Its pathway is one-carbon metabolism; methanogenesis from CO(2); methyl-coenzyme M from 5,10-methylene-5,6,7,8-tetrahydromethanopterin: step 2/2. Its function is as follows. Part of a complex that catalyzes the formation of methyl-coenzyme M and tetrahydromethanopterin from coenzyme M and methyl-tetrahydromethanopterin. This is an energy-conserving, sodium-ion translocating step. In Methanopyrus kandleri (strain AV19 / DSM 6324 / JCM 9639 / NBRC 100938), this protein is Tetrahydromethanopterin S-methyltransferase subunit F.